The primary structure comprises 102 residues: RNA-binding protein Hfq (102 aa).

The Sm domain maps to 9–68 (DPFLNALRRERVPVSIYLVNGIKLQGQIESFDQFVILLKNTVSQMVYKHAISTVVPSRPV). A disordered region spans residues 64–102 (PSRPVSHHSNTPSGGTSNYHHGNNPSAPQQPQQESDDAE). The segment covering 70-96 (HHSNTPSGGTSNYHHGNNPSAPQQPQQ) has biased composition (polar residues).

The protein belongs to the Hfq family. As to quaternary structure, homohexamer.

In terms of biological role, RNA chaperone that binds small regulatory RNA (sRNAs) and mRNAs to facilitate mRNA translational regulation in response to envelope stress, environmental stress and changes in metabolite concentrations. Also binds with high specificity to tRNAs. This Serratia proteamaculans (strain 568) protein is RNA-binding protein Hfq.